A 427-amino-acid polypeptide reads, in one-letter code: Gamma-glutamyl phosphate reductase (427 aa).

This sequence belongs to the gamma-glutamyl phosphate reductase family.

It is found in the cytoplasm. It carries out the reaction L-glutamate 5-semialdehyde + phosphate + NADP(+) = L-glutamyl 5-phosphate + NADPH + H(+). It participates in amino-acid biosynthesis; L-proline biosynthesis; L-glutamate 5-semialdehyde from L-glutamate: step 2/2. Functionally, catalyzes the NADPH-dependent reduction of L-glutamate 5-phosphate into L-glutamate 5-semialdehyde and phosphate. The product spontaneously undergoes cyclization to form 1-pyrroline-5-carboxylate. In Rhodospirillum rubrum (strain ATCC 11170 / ATH 1.1.1 / DSM 467 / LMG 4362 / NCIMB 8255 / S1), this protein is Gamma-glutamyl phosphate reductase.